We begin with the raw amino-acid sequence, 486 residues long: Ribulose bisphosphate carboxylase large chain (486 aa).

The substrate site is built by Asn125 and Thr175. The Proton acceptor role is filled by Lys177. Lys179 is a binding site for substrate. 3 residues coordinate Mg(2+): Lys203, Asp205, and Glu206. Lys203 carries the post-translational modification N6-carboxylysine. The Proton acceptor role is filled by His295. 3 residues coordinate substrate: Arg296, His328, and Ser380.

Belongs to the RuBisCO large chain family. Type I subfamily. Heterohexadecamer of 8 large chains and 8 small chains. Mg(2+) serves as cofactor.

The catalysed reaction is 2 (2R)-3-phosphoglycerate + 2 H(+) = D-ribulose 1,5-bisphosphate + CO2 + H2O. It carries out the reaction D-ribulose 1,5-bisphosphate + O2 = 2-phosphoglycolate + (2R)-3-phosphoglycerate + 2 H(+). Functionally, ruBisCO catalyzes two reactions: the carboxylation of D-ribulose 1,5-bisphosphate, the primary event in carbon dioxide fixation, as well as the oxidative fragmentation of the pentose substrate. Both reactions occur simultaneously and in competition at the same active site. This is Ribulose bisphosphate carboxylase large chain from Afipia carboxidovorans (strain ATCC 49405 / DSM 1227 / KCTC 32145 / OM5) (Oligotropha carboxidovorans).